Reading from the N-terminus, the 130-residue chain is Capsid protein (130 aa).

A viral RNA-binding region spans residues 31 to 104; sequence EWLSNNSRSQ…FAATDDVTVI (74 aa).

It belongs to the Leviviricetes capsid protein family. As to quaternary structure, homodimer. The capsid proteins form dimers that assemble by group of 5. Twelve such pentamers are linked together with free dimers. The homodimers binds to the viral RNA via an operator hairpin, but also to many other RNA sequences in the viral genome; this interaction probably shifts the virus from the replicative to the assembly phase and ensures specific encapsidation of the viral genome.

It localises to the virion. Functionally, capsid protein self-assembles to form an icosahedral capsid with a T=3 symmetry, about 26 nm in diameter, and consisting of 89 capsid proteins dimers (178 capsid proteins). Involved in viral genome encapsidation through the interaction between a capsid protein dimer and the multiple packaging signals present in the RNA genome. The capsid also contains 1 copy of the A2 maturation protein. Its function is as follows. Acts as a translational repressor of viral replicase synthesis late in infection. This latter function is the result of capsid protein interaction with an RNA hairpin which contains the replicase ribosome-binding site. The polypeptide is Capsid protein (Escherichia coli (Bacteriophage JP34)).